The primary structure comprises 906 residues: Protein transport protein SEC24-2 (906 aa).

Residues Cys222, Cys225, Cys244, and Cys247 each contribute to the Zn(2+) site. Residues 222–247 are zinc finger-like; that stretch reads CRRCRSYMNPFVTFIEQGRRWRCNFC.

It belongs to the SEC23/SEC24 family. SEC24 subfamily. In terms of assembly, the COPII coat is composed of at least 5 proteins: the SEC23/24 complex, the SEC13/31 complex, and the protein SAR1. Golgi apparatus membrane; Peripheral membrane protein; Cytoplasmic side.

It is found in the cytoplasm. The protein localises to the cytoplasmic vesicle. It localises to the COPII-coated vesicle membrane. Its subcellular location is the endoplasmic reticulum membrane. The protein resides in the golgi apparatus membrane. Its function is as follows. Component of the coat protein complex II (COPII) which promotes the formation of transport vesicles from the endoplasmic reticulum (ER). The coat has two main functions, the physical deformation of the endoplasmic reticulum membrane into vesicles and the selection of cargo molecules. The polypeptide is Protein transport protein SEC24-2 (SEC242) (Candida glabrata (strain ATCC 2001 / BCRC 20586 / JCM 3761 / NBRC 0622 / NRRL Y-65 / CBS 138) (Yeast)).